A 433-amino-acid chain; its full sequence is GTPase Obg (433 aa).

Positions Met1–Leu159 constitute an Obg domain. An OBG-type G domain is found at Ala160–Lys332. Residues Gly166–Ser173, Phe191–Thr195, Asp213–Gly216, Asn284–Asp287, and Ser313–Leu315 each bind GTP. Mg(2+)-binding residues include Ser173 and Thr193. One can recognise an OCT domain in the interval Lys355–Asp433.

It belongs to the TRAFAC class OBG-HflX-like GTPase superfamily. OBG GTPase family. Monomer. The cofactor is Mg(2+).

It localises to the cytoplasm. Its function is as follows. An essential GTPase which binds GTP, GDP and possibly (p)ppGpp with moderate affinity, with high nucleotide exchange rates and a fairly low GTP hydrolysis rate. Plays a role in control of the cell cycle, stress response, ribosome biogenesis and in those bacteria that undergo differentiation, in morphogenesis control. This chain is GTPase Obg, found in Mycoplasma mycoides subsp. mycoides SC (strain CCUG 32753 / NCTC 10114 / PG1).